The following is a 522-amino-acid chain: MKWFKYGDGMDLFADMRQEAAGEKERVVMHSQEPWCVLLVDDDEQMHQITRLALTGFKFQNRPLELISVLSGLEARKVMAERSDIALALVDVVMETEHAGLDLVRYIREELQNRQVRLVLRTGQAGQAPEDRVIKEYEIDDYKEKTELTTQKLRTLLYSMLRAYRDLCLIEDQKLGLSHVIEASANVQNTKSLQSYATAVLNQLTSLLKLHASAFYCVATPCPDSEKCNALTVATTAERVELYVESPFKGLPEDVQRRCKEVLSQRTTRDYGDAYVFFKQDERGVDSVLYVGFEQELSELDRKLLEIYMYNIGLTFENINLMVDLRETSKELVYNLANAVEARSRETGAHVQRVALYCERLAHLYGLAESEADMIKNASPLHDVGKVAIPDSILHKPGKLDAQEWAIMQKHVEYGVEILNRSKRRLMQVAKEIAATHHEKWDGSGYPNRLQGDDIPISGRITAIADVFDALGAKRSYKDPWTDEQIREELMAQKGRHFEPKLVELLLEHWDEFIAIRASLPD.

The Response regulatory domain occupies 36-160; the sequence is CVLLVDDDEQ…QKLRTLLYSM (125 aa). A 4-aspartylphosphate modification is found at aspartate 91. Residues 325–522 form the HD-GYP domain; that stretch reads LRETSKELVY…FIAIRASLPD (198 aa). A divalent metal cation is bound by residues histidine 382 and aspartate 383. The active-site Proton donor is lysine 386. A divalent metal cation is bound by residues histidine 411, histidine 437, histidine 438, and aspartate 466.

Homodimer. Mn(2+) serves as cofactor.

The enzyme catalyses 3',3'-cGAMP + H2O = 5'-pApG-3' + H(+). In terms of biological role, phosphodiesterase (PDE) that catalyzes the hydrolysis of 3'3'-cyclic GMP-AMP (3'3'-cGAMP), leading to linear 5'-pApG. Counteracts the function of the 3'3'-cGAMP synthase DncV, and is involved in the modulation of intracellular 3'3'-cGAMP levels. Enhances bacterial chemotaxis and inhibits intestinal colonization in vivo. Thus exerts a crucial role in regulating bacterial infectivity through catalyzing 3'3'-cGAMP degradation. Is specific for 3'3'-cGAMP since it cannot degrade other cGAMP linkage isomers (3'2'-, 2'3'-, and 2'2'-cGAMPs). Is also able to hydrolyze c-di-GMP but not c-di-AMP. In Vibrio cholerae serotype O1 (strain ATCC 39315 / El Tor Inaba N16961), this protein is 3'3'-cGAMP-specific phosphodiesterase 2.